Reading from the N-terminus, the 130-residue chain is Protein ApaG (130 aa).

An ApaG domain is found at 3-127; that stretch reads KAETRGIMVT…FSLDSPHLRR (125 aa).

This is Protein ApaG from Methylorubrum extorquens (strain CM4 / NCIMB 13688) (Methylobacterium extorquens).